Here is a 235-residue protein sequence, read N- to C-terminus: MAKRSKAYEAAAAKIDAEKFYAPFEAVTLAKDTNPSKFDATVEVAFRLGVDPRKADQMVRGTVNLPHGTGKVARVLVFATGDKAEAAIAAGADFVGSDDLIEKIAAGWTDFDAAVATPDLMGKVGRLGKVLGPRNLMPNPKTGTVTPDVTKAVNDIKGGKIDFRVDKHSNLHFIIGKVSFDAIKLAENYAAALEEVLRLKPSASKGRYIQKATVATTFGPGISVDPNVTKVLTEV.

The protein belongs to the universal ribosomal protein uL1 family. As to quaternary structure, part of the 50S ribosomal subunit.

Its function is as follows. Binds directly to 23S rRNA. The L1 stalk is quite mobile in the ribosome, and is involved in E site tRNA release. In terms of biological role, protein L1 is also a translational repressor protein, it controls the translation of the L11 operon by binding to its mRNA. The sequence is that of Large ribosomal subunit protein uL1 from Arthrobacter sp. (strain FB24).